A 400-amino-acid polypeptide reads, in one-letter code: CinA-like protein (400 aa).

It belongs to the CinA family.

In Sulfurihydrogenibium sp. (strain YO3AOP1), this protein is CinA-like protein.